The primary structure comprises 80 residues: Acyl carrier protein (80 aa).

One can recognise a Carrier domain in the interval 4–79 (EAILEKVRSI…DAVKYIEDKQ (76 aa)). The residue at position 39 (Ser-39) is an O-(pantetheine 4'-phosphoryl)serine.

This sequence belongs to the acyl carrier protein (ACP) family. 4'-phosphopantetheine is transferred from CoA to a specific serine of apo-ACP by AcpS. This modification is essential for activity because fatty acids are bound in thioester linkage to the sulfhydryl of the prosthetic group.

It is found in the cytoplasm. It functions in the pathway lipid metabolism; fatty acid biosynthesis. Functionally, carrier of the growing fatty acid chain in fatty acid biosynthesis. This is Acyl carrier protein from Synechococcus sp. (strain CC9902).